Consider the following 317-residue polypeptide: Acetyl-coenzyme A carboxylase carboxyl transferase subunit beta (317 aa).

Positions 1–28 (MANNMTDTMTKPDINNDSTSLQQNGNKA) are disordered. Positions 55 to 317 (PSTKCSSCHS…LCSVPNVDVQ (263 aa)) constitute a CoA carboxyltransferase N-terminal domain. 4 residues coordinate Zn(2+): Cys59, Cys62, Cys78, and Cys81. The C4-type zinc-finger motif lies at 59 to 81 (CSSCHSIITNTALIFNCYVCPHC).

Belongs to the AccD/PCCB family. Acetyl-CoA carboxylase is a heterohexamer composed of biotin carboxyl carrier protein (AccB), biotin carboxylase (AccC) and two subunits each of ACCase subunit alpha (AccA) and ACCase subunit beta (AccD). The cofactor is Zn(2+).

It localises to the cytoplasm. The enzyme catalyses N(6)-carboxybiotinyl-L-lysyl-[protein] + acetyl-CoA = N(6)-biotinyl-L-lysyl-[protein] + malonyl-CoA. Its pathway is lipid metabolism; malonyl-CoA biosynthesis; malonyl-CoA from acetyl-CoA: step 1/1. Its function is as follows. Component of the acetyl coenzyme A carboxylase (ACC) complex. Biotin carboxylase (BC) catalyzes the carboxylation of biotin on its carrier protein (BCCP) and then the CO(2) group is transferred by the transcarboxylase to acetyl-CoA to form malonyl-CoA. The protein is Acetyl-coenzyme A carboxylase carboxyl transferase subunit beta of Psychrobacter cryohalolentis (strain ATCC BAA-1226 / DSM 17306 / VKM B-2378 / K5).